The chain runs to 120 residues: Protein RALF-like 1 (120 aa).

A signal peptide spans 1–26 (MDKSFTLFLTLTILVVFIISSPPVQA). Positions 27 to 71 (GFANDLGGVAWATTGDNGSGCHGSIAECIGAEEEEMDSEINRRIL) are cleaved as a propeptide — removed in mature form. A glycan (N-linked (GlcNAc...) asparagine) is linked at N43. Cystine bridges form between C89/C99 and C112/C118.

Belongs to the plant rapid alkalinization factor (RALF) family. As to quaternary structure, interacts with FER and promotes its phosphorylation and subsequent activation. Proteolytically cleaved, probably by S1P, a subtilisin-like serine protease (subtilase). Expressed in roots and stems.

It is found in the secreted. Its function is as follows. Cell signaling peptide that may regulate plant stress, growth, and development. Mediates a rapid alkalinization of extracellular space by mediating a transient increase in the cytoplasmic Ca(2+) concentration leading to a calcium-dependent signaling events through a cell surface receptor and a concomitant activation of some intracellular mitogen-activated protein kinases. Mostly active in roots. Prevents plant growth (e.g. root and leaf length). Suppresses cell elongation of the primary root by activating the cell surface receptor FER and triggering phosphorylation of AHA2 and subsequent extracellular alkalinization. The protein is Protein RALF-like 1 (RALF1) of Arabidopsis thaliana (Mouse-ear cress).